The following is a 387-amino-acid chain: MSNGAFDAIFEYAWGQIDKPISGDFIYGKDLPKLIEIIENIFQKAQKSGSYELRLPLFSEINKDLFRTFSNTKTFFKIHKEEFDDIFFNLVNHPLREILENAFIGVDSIPSDFIVSMNLNSPSKFLVENKSKNTEGAGISTPRKKLTESPIKLLSRNNIGKALEVQVEELKRELTAKQSLLQENERQVSELKIRLETYQEKYASIQQRFSDLQKARQVEDNQNSSRTSDPGSPLVTGIDQKAILEEFRRRLQRQTDTISFLKDQIRRERGLNCSNDKVSHSKRKHATTDGDGTFKNFISAVPSNIWVKATIRIIVCFALLAGVLPYIRKYVYAHDTPSQNSRLQLSWWENSGILSKIVWFFEDQTDLETEYRSNANVDDAYSRVFGI.

Residues 157–269 (NNIGKALEVQ…FLKDQIRRER (113 aa)) are a coiled coil. A disordered region spans residues 216-235 (RQVEDNQNSSRTSDPGSPLV). Over residues 220 to 230 (DNQNSSRTSDP) the composition is skewed to polar residues. The helical transmembrane segment at 311–327 (IRIIVCFALLAGVLPYI) threads the bilayer.

Belongs to the MPS2 family. As to quaternary structure, interacts with BBP1, MPS3, and SPC24.

The protein resides in the nucleus membrane. It localises to the cytoplasm. It is found in the cytoskeleton. The protein localises to the microtubule organizing center. Its subcellular location is the spindle pole body. Component of the spindle pole body (SPB) required for insertion of the nascent SPB into the nuclear envelope and for the proper execution of spindle pole body (SPB) duplication. This Saccharomyces cerevisiae (strain JAY291) (Baker's yeast) protein is Monopolar spindle protein 2 (MPS2).